A 337-amino-acid polypeptide reads, in one-letter code: GTPase Obg (337 aa).

In terms of domain architecture, Obg spans 4-162 (SNFVDYAKIH…RQIVFQLKLL (159 aa)). Positions 163–329 (ADVGLVGFPN…LKDLLWEKLR (167 aa)) constitute an OBG-type G domain. Residues 169-176 (GFPNTGKS), 194-198 (FTTLE), 216-219 (DIPG), 283-286 (SKSD), and 310-312 (SSF) contribute to the GTP site. Serine 176 and threonine 196 together coordinate Mg(2+).

It belongs to the TRAFAC class OBG-HflX-like GTPase superfamily. OBG GTPase family. As to quaternary structure, monomer. Mg(2+) serves as cofactor.

The protein resides in the cytoplasm. Its function is as follows. An essential GTPase which binds GTP, GDP and possibly (p)ppGpp with moderate affinity, with high nucleotide exchange rates and a fairly low GTP hydrolysis rate. Plays a role in control of the cell cycle, stress response, ribosome biogenesis and in those bacteria that undergo differentiation, in morphogenesis control. The sequence is that of GTPase Obg from Azobacteroides pseudotrichonymphae genomovar. CFP2.